A 164-amino-acid chain; its full sequence is ATP synthase subunit b 1 (164 aa).

A helical transmembrane segment spans residues 8-28; the sequence is PETWVAIAFVILMGLFAYLGV.

It belongs to the ATPase B chain family. F-type ATPases have 2 components, F(1) - the catalytic core - and F(0) - the membrane proton channel. F(1) has five subunits: alpha(3), beta(3), gamma(1), delta(1), epsilon(1). F(0) has three main subunits: a(1), b(2) and c(10-14). The alpha and beta chains form an alternating ring which encloses part of the gamma chain. F(1) is attached to F(0) by a central stalk formed by the gamma and epsilon chains, while a peripheral stalk is formed by the delta and b chains.

The protein resides in the cell inner membrane. Functionally, f(1)F(0) ATP synthase produces ATP from ADP in the presence of a proton or sodium gradient. F-type ATPases consist of two structural domains, F(1) containing the extramembraneous catalytic core and F(0) containing the membrane proton channel, linked together by a central stalk and a peripheral stalk. During catalysis, ATP synthesis in the catalytic domain of F(1) is coupled via a rotary mechanism of the central stalk subunits to proton translocation. In terms of biological role, component of the F(0) channel, it forms part of the peripheral stalk, linking F(1) to F(0). In Bradyrhizobium sp. (strain ORS 278), this protein is ATP synthase subunit b 1.